The following is a 172-amino-acid chain: Counting factor-associated protein B (172 aa).

Positions 1 to 21 (MKLLNSLILLVLTCLVSSINT) are cleaved as a signal peptide. N-linked (GlcNAc...) asparagine glycans are attached at residues N37 and N153.

The protein resides in the secreted. This Dictyostelium discoideum (Social amoeba) protein is Counting factor-associated protein B (cfaB).